The sequence spans 217 residues: Ribulose-phosphate 3-epimerase (217 aa).

Ser-7 is a binding site for substrate. Residues His-32, Asp-34, and His-65 each coordinate a divalent metal cation. Asp-34 acts as the Proton acceptor in catalysis. Substrate contacts are provided by residues His-65, 141–144, 175–177, and 197–198; these read GFGG, DGG, and GS. Residue Asp-175 participates in a divalent metal cation binding. The active-site Proton donor is the Asp-175.

This sequence belongs to the ribulose-phosphate 3-epimerase family. Requires a divalent metal cation as cofactor.

It carries out the reaction D-ribulose 5-phosphate = D-xylulose 5-phosphate. The protein operates within carbohydrate degradation. In terms of biological role, catalyzes the reversible epimerization of D-ribulose 5-phosphate to D-xylulose 5-phosphate. The sequence is that of Ribulose-phosphate 3-epimerase from Bacillus subtilis (strain 168).